Reading from the N-terminus, the 108-residue chain is Movement protein (108 aa).

Residues 1–25 (MDASSQYSALPYPQPPRVPSAAPSA) are disordered. A helical membrane pass occupies residues 35-55 (EIVIFTFVSVLALYLLWLWVL). A disordered region spans residues 73 to 108 (LIFGPGERPPVASADGSRPVPDPSPPVRRDLDLSRV). The span at 99-108 (VRRDLDLSRV) shows a compositional bias: basic and acidic residues.

This sequence belongs to the mastrevirus movement protein family. In terms of assembly, interacts with the capsid protein (CP). Part of a MP-CP-viral DNA complex.

The protein localises to the host membrane. In terms of biological role, involved in the viral transport within, and between cells. The sequence is that of Movement protein from Megathyrsus maximus (PanSV).